Reading from the N-terminus, the 853-residue chain is Neural cell adhesion molecule 1 (853 aa).

Residues 1–19 (MLQTKNLIWTLFFLGTAVS) form the signal peptide. Ig-like C2-type domains follow at residues 20–111 (LQVD…ATVN), 116–205 (QKLM…KDIQ), 212–300 (PTVQ…ASIH), 307–412 (PKIT…LEVQ), and 415–500 (PKLQ…ESLE). At 20–719 (LQVDIVPSQG…NGSPTSGLST (700 aa)) the chain is on the extracellular side. 2 disulfide bridges follow: Cys-41–Cys-96 and Cys-139–Cys-189. Heparin is bound by residues 152–156 (KHKGR) and 161–165 (KKDVR). Asn-222 carries N-linked (GlcNAc...) asparagine glycosylation. Cys-235 and Cys-286 are disulfide-bonded. N-linked (GlcNAc...) asparagine glycosylation is found at Asn-314, Asn-346, Asn-432, Asn-458, and Asn-487. A disulfide bond links Cys-328 and Cys-394. A disulfide bond links Cys-435 and Cys-488. Fibronectin type-III domains lie at 508 to 607 (TPSS…TQPV) and 609 to 704 (EPSA…SAQP). The chain crosses the membrane as a helical span at residues 720–737 (GAIVGILVVTFVLLLVAV). At 738–853 (DVTCYFLNKC…TQIKVNESKA (116 aa)) the chain is on the cytoplasmic side. The segment at 764–853 (GAKGKDMEEG…TQIKVNESKA (90 aa)) is disordered. 2 stretches are compositionally biased toward basic and acidic residues: residues 766-807 (KGKD…HTEP) and 815-829 (EPEK…ETET). A phosphoserine mark is found at Ser-778 and Ser-782. Polar residues predominate over residues 838 to 853 (TVPNDATQIKVNESKA).

Interacts with MDK. Found in a complex with SLC39A6, SLC39A10 and with NCAM1; this complex controls NCAM1 phosphorylation and integration into focal adhesion complexes during epithelial-tomesenchymal transition. Interacts with synaptic plasticity regulator PANTS. In terms of processing, polysialylated by ST8SIA2 and ST8SIA4. Polysialylation modulates cell interactions by confering both attractive and repulsive properties that are highly regulated by ST8SIA2 and ST8SIA4. Polysialylation is formed on a-2,3-linked sialic acid of core glycans.

It localises to the cell membrane. This protein is a cell adhesion molecule involved in neuron-neuron adhesion, neurite fasciculation, outgrowth of neurites, etc. This is Neural cell adhesion molecule 1 from Bos taurus (Bovine).